The following is a 106-amino-acid chain: Large ribosomal subunit protein uL24 (106 aa).

This sequence belongs to the universal ribosomal protein uL24 family. As to quaternary structure, part of the 50S ribosomal subunit.

Functionally, one of two assembly initiator proteins, it binds directly to the 5'-end of the 23S rRNA, where it nucleates assembly of the 50S subunit. One of the proteins that surrounds the polypeptide exit tunnel on the outside of the subunit. The protein is Large ribosomal subunit protein uL24 of Paramagnetospirillum magneticum (strain ATCC 700264 / AMB-1) (Magnetospirillum magneticum).